The chain runs to 200 residues: Transgelin (200 aa).

Serine 2 is modified (N-acetylserine). The residue at position 11 (serine 11) is a Phosphoserine. In terms of domain architecture, Calponin-homology (CH) spans proline 26 to alanine 136. Residues phenylalanine 144–glutamine 168 are disordered. Residues leucine 151–proline 164 form an interaction with SH3 domain of ABP1 region. Over residues lysine 154 to lysine 165 the composition is skewed to basic residues.

In terms of assembly, binds to actin. Interacts with ABP1.

The protein resides in the cytoplasm. The protein localises to the cytoskeleton. It localises to the actin patch. Functionally, has actin-binding and actin-bundling activity. Stabilizes actin filaments against disassembly. The sequence is that of Transgelin (SCP1) from Saccharomyces cerevisiae (strain ATCC 204508 / S288c) (Baker's yeast).